The primary structure comprises 413 residues: MLRILLINSDKPEPIQFFQKDKETNDSINISVITRSCYAPLYSHWADHVYIVDDVTDLTVMKSLMLEILKVGPFDHIVSTTEKSILTGGFLRSYFGIAGPGFETALYMTNKLAMKTKLKMEGIPVADFLCVSQVEDIPAAGEKLGWPIIVKPALGSGALNTFIIHSLDHYEDLYSTSGGLGELKKNNSLMIAEKCIEMEEFHCDTLYADGEILFVSISKYTVPLLKGMAKIQGSFILSQNDPVYAEILELQKSVAQAFRITDGPGHLEIYRTHSGELIVGEIAMRIGGGGISRMIEKKFNISLWESSLNISVYRDPNLTVNPIEGTVGYFSLPCRNGTIKEFTPIEEWEKLAGILEVELLYQEGDVVDEKQSSSFDLARLYFCLENENEVQHLLALVKQTYYLHLTEDHMMNQ.

An ATP-grasp domain is found at 115 to 312 (KTKLKMEGIP…LWESSLNISV (198 aa)). 141–202 (GEKLGWPIIV…EKCIEMEEFH (62 aa)) is an ATP binding site. Mg(2+)-binding residues include glutamate 268 and glutamate 281. Residues glutamate 268 and glutamate 281 each coordinate Mn(2+).

In terms of assembly, homodimer. It depends on Mg(2+) as a cofactor. The cofactor is Mn(2+). Co(2+) is required as a cofactor.

It catalyses the reaction an L-alpha-amino acid + L-arginine + ATP = L-arginyl-L-alpha-amino acid + ADP + phosphate + H(+). In terms of biological role, catalyzes the synthesis of Arg-Xaa dipeptides in an ATP-dependent manner. Has strict specificity toward arginine as the N-terminal substrate. The polypeptide is L-arginine-specific L-amino acid ligase (Bacillus subtilis).